The sequence spans 105 residues: Pyrimidine/purine nucleoside phosphorylase (105 aa).

It belongs to the nucleoside phosphorylase PpnP family.

The catalysed reaction is a purine D-ribonucleoside + phosphate = a purine nucleobase + alpha-D-ribose 1-phosphate. It carries out the reaction adenosine + phosphate = alpha-D-ribose 1-phosphate + adenine. The enzyme catalyses cytidine + phosphate = cytosine + alpha-D-ribose 1-phosphate. It catalyses the reaction guanosine + phosphate = alpha-D-ribose 1-phosphate + guanine. The catalysed reaction is inosine + phosphate = alpha-D-ribose 1-phosphate + hypoxanthine. It carries out the reaction thymidine + phosphate = 2-deoxy-alpha-D-ribose 1-phosphate + thymine. The enzyme catalyses uridine + phosphate = alpha-D-ribose 1-phosphate + uracil. It catalyses the reaction xanthosine + phosphate = alpha-D-ribose 1-phosphate + xanthine. Its function is as follows. Catalyzes the phosphorolysis of diverse nucleosides, yielding D-ribose 1-phosphate and the respective free bases. Can use uridine, adenosine, guanosine, cytidine, thymidine, inosine and xanthosine as substrates. Also catalyzes the reverse reactions. The chain is Pyrimidine/purine nucleoside phosphorylase from Ralstonia pickettii (strain 12J).